We begin with the raw amino-acid sequence, 154 residues long: NADPH-dependent 7-cyano-7-deazaguanine reductase (154 aa).

The segment covering 1 to 21 has biased composition (polar residues); that stretch reads MPNTDVSSLSMLGQQTETAQS. Positions 1–28 are disordered; that stretch reads MPNTDVSSLSMLGQQTETAQSPEEAVLE. Cysteine 52 functions as the Thioimide intermediate in the catalytic mechanism. The active-site Proton donor is aspartate 59. Residues 74-76 and 93-94 contribute to the substrate site; these read VES and HE.

The protein belongs to the GTP cyclohydrolase I family. QueF type 1 subfamily.

Its subcellular location is the cytoplasm. It catalyses the reaction 7-aminomethyl-7-carbaguanine + 2 NADP(+) = 7-cyano-7-deazaguanine + 2 NADPH + 3 H(+). It participates in tRNA modification; tRNA-queuosine biosynthesis. Its function is as follows. Catalyzes the NADPH-dependent reduction of 7-cyano-7-deazaguanine (preQ0) to 7-aminomethyl-7-deazaguanine (preQ1). In Rhizobium johnstonii (strain DSM 114642 / LMG 32736 / 3841) (Rhizobium leguminosarum bv. viciae), this protein is NADPH-dependent 7-cyano-7-deazaguanine reductase.